The chain runs to 110 residues: MSEFKRIPPEQALELRKKEGAVVVDIRDPQAFAAGHITGARHLDNHSVADFIRNADLDAPTLVVCYHGNSSQSAAAYLVGQGFSDVYSVDGGFELWRATYPAETAQGNAE.

The region spanning 17–105 (KKEGAVVVDI…WRATYPAETA (89 aa)) is the Rhodanese domain. The active-site Cysteine persulfide intermediate is the Cys-65.

This sequence belongs to the GlpE family.

It localises to the cytoplasm. It carries out the reaction thiosulfate + hydrogen cyanide = thiocyanate + sulfite + 2 H(+). The catalysed reaction is thiosulfate + [thioredoxin]-dithiol = [thioredoxin]-disulfide + hydrogen sulfide + sulfite + 2 H(+). Transferase that catalyzes the transfer of sulfur from thiosulfate to thiophilic acceptors such as cyanide or dithiols. May function in a CysM-independent thiosulfate assimilation pathway by catalyzing the conversion of thiosulfate to sulfite, which can then be used for L-cysteine biosynthesis. This Pseudomonas putida (strain ATCC 700007 / DSM 6899 / JCM 31910 / BCRC 17059 / LMG 24140 / F1) protein is Thiosulfate sulfurtransferase GlpE.